The sequence spans 72 residues: DNA gyrase inhibitor YacG (72 aa).

Residues cysteine 7, cysteine 10, cysteine 26, and cysteine 30 each coordinate Zn(2+). The tract at residues 44 to 72 (SIAGEEHTPSSDTARPQLSAEDLALLEQD) is disordered.

Belongs to the DNA gyrase inhibitor YacG family. Interacts with GyrB. Zn(2+) is required as a cofactor.

Its function is as follows. Inhibits all the catalytic activities of DNA gyrase by preventing its interaction with DNA. Acts by binding directly to the C-terminal domain of GyrB, which probably disrupts DNA binding by the gyrase. The chain is DNA gyrase inhibitor YacG from Tolumonas auensis (strain DSM 9187 / NBRC 110442 / TA 4).